The primary structure comprises 307 residues: Glycine--tRNA ligase alpha subunit (307 aa).

Belongs to the class-II aminoacyl-tRNA synthetase family. As to quaternary structure, tetramer of two alpha and two beta subunits.

It localises to the cytoplasm. It catalyses the reaction tRNA(Gly) + glycine + ATP = glycyl-tRNA(Gly) + AMP + diphosphate. The chain is Glycine--tRNA ligase alpha subunit (glyQ) from Xylella fastidiosa (strain 9a5c).